Consider the following 275-residue polypeptide: Methylthioribulose-1-phosphate dehydratase (275 aa).

Cys125 is a substrate binding site. Positions 143 and 145 each coordinate Zn(2+). Glu168 functions as the Proton donor/acceptor in the catalytic mechanism. Position 233 (His233) interacts with Zn(2+).

Belongs to the aldolase class II family. MtnB subfamily. Zn(2+) serves as cofactor.

The protein resides in the cytoplasm. It carries out the reaction 5-(methylsulfanyl)-D-ribulose 1-phosphate = 5-methylsulfanyl-2,3-dioxopentyl phosphate + H2O. It functions in the pathway amino-acid biosynthesis; L-methionine biosynthesis via salvage pathway; L-methionine from S-methyl-5-thio-alpha-D-ribose 1-phosphate: step 2/6. Functionally, catalyzes the dehydration of methylthioribulose-1-phosphate (MTRu-1-P) into 2,3-diketo-5-methylthiopentyl-1-phosphate (DK-MTP-1-P). This Lodderomyces elongisporus (strain ATCC 11503 / CBS 2605 / JCM 1781 / NBRC 1676 / NRRL YB-4239) (Yeast) protein is Methylthioribulose-1-phosphate dehydratase.